Consider the following 183-residue polypeptide: RNA 2',3'-cyclic phosphodiesterase (183 aa).

H44 (proton donor) is an active-site residue. Short sequence motifs (HXTX) lie at residues 44–47 and 130–133; these read HITL and HMTL. The Proton acceptor role is filled by H130.

This sequence belongs to the 2H phosphoesterase superfamily. ThpR family.

It carries out the reaction a 3'-end 2',3'-cyclophospho-ribonucleotide-RNA + H2O = a 3'-end 2'-phospho-ribonucleotide-RNA + H(+). Its function is as follows. Hydrolyzes RNA 2',3'-cyclic phosphodiester to an RNA 2'-phosphomonoester. The sequence is that of RNA 2',3'-cyclic phosphodiesterase (ytlP) from Bacillus subtilis (strain 168).